We begin with the raw amino-acid sequence, 305 residues long: Beta-carotene 3-hydroxylase, chloroplastic (305 aa).

A chloroplast-targeting transit peptide spans 1 to 41 (MAFAMSSSLTLFQYQSFGKKPFFSRRRDFAGCSMMNPLVAR). The next 2 membrane-spanning stretches (helical) occupy residues 98 to 118 (YLVA…AAVY) and 129 to 149 (AVPL…AVGM). The region spanning 146–272 (AVGMEYWARW…KFNGVPYGLF (127 aa)) is the Fatty acid hydroxylase domain. Residues 157–162 (HRALWH) carry the Histidine box-1 motif. Positions 169–173 (HESHH) match the Histidine box-2 motif. 2 helical membrane passes run 184-204 (DVFA…GFFH) and 207-227 (FFSG…MAYM). Positions 230–235 (HDGLVH) match the Histidine box-3 motif. Positions 256–260 (HQIHH) match the Histidine box-4 motif.

This sequence belongs to the sterol desaturase family. In terms of assembly, homodimer. In terms of tissue distribution, expressed in flower buds and lips. Detected in roots and leaves.

The protein localises to the plastid. It localises to the chloroplast membrane. The catalysed reaction is all-trans-beta-carotene + 4 reduced [2Fe-2S]-[ferredoxin] + 2 O2 + 4 H(+) = all-trans-zeaxanthin + 4 oxidized [2Fe-2S]-[ferredoxin] + 2 H2O. Functionally, nonheme diiron monooxygenase involved in the biosynthesis of xanthophylls. Specific for beta-ring hydroxylations of beta-carotene. Uses ferredoxin as an electron donor. This is Beta-carotene 3-hydroxylase, chloroplastic (BHY) from Oncidium hybrid cultivar (Orchid).